A 279-amino-acid polypeptide reads, in one-letter code: 4-diphosphocytidyl-2-C-methyl-D-erythritol kinase (279 aa).

The active site involves K11. 95–105 (PVAAGLGGGSS) contributes to the ATP binding site. The active site involves D137.

Belongs to the GHMP kinase family. IspE subfamily.

The enzyme catalyses 4-CDP-2-C-methyl-D-erythritol + ATP = 4-CDP-2-C-methyl-D-erythritol 2-phosphate + ADP + H(+). The protein operates within isoprenoid biosynthesis; isopentenyl diphosphate biosynthesis via DXP pathway; isopentenyl diphosphate from 1-deoxy-D-xylulose 5-phosphate: step 3/6. In terms of biological role, catalyzes the phosphorylation of the position 2 hydroxy group of 4-diphosphocytidyl-2C-methyl-D-erythritol. The chain is 4-diphosphocytidyl-2-C-methyl-D-erythritol kinase from Geotalea daltonii (strain DSM 22248 / JCM 15807 / FRC-32) (Geobacter daltonii).